The primary structure comprises 504 residues: Cytochrome P450 2K4 (504 aa).

Residue cysteine 447 participates in heme binding.

The protein belongs to the cytochrome P450 family. Heme serves as cofactor.

The protein localises to the endoplasmic reticulum membrane. The protein resides in the microsome membrane. It carries out the reaction an organic molecule + reduced [NADPH--hemoprotein reductase] + O2 = an alcohol + oxidized [NADPH--hemoprotein reductase] + H2O + H(+). The protein is Cytochrome P450 2K4 (cyp2k4) of Oncorhynchus mykiss (Rainbow trout).